Reading from the N-terminus, the 362-residue chain is Heme A synthase (362 aa).

Transmembrane regions (helical) follow at residues 10-30 (LAAI…MVLV), 102-122 (VIGM…AVSG), 128-148 (LWLI…MVAS), 159-179 (VRLA…VWTL), and 198-218 (AWGL…VAGL). Position 262 (H262) interacts with heme. Helical transmembrane passes span 266–286 (AYTL…AGAG), 297–317 (LAAI…VVPI), and 318–338 (SLAL…VLQA). H323 contacts heme.

Belongs to the COX15/CtaA family. Type 2 subfamily. Interacts with CtaB. Requires heme b as cofactor.

The protein resides in the cell membrane. It carries out the reaction Fe(II)-heme o + 2 A + H2O = Fe(II)-heme a + 2 AH2. It functions in the pathway porphyrin-containing compound metabolism; heme A biosynthesis; heme A from heme O: step 1/1. Functionally, catalyzes the conversion of heme O to heme A by two successive hydroxylations of the methyl group at C8. The first hydroxylation forms heme I, the second hydroxylation results in an unstable dihydroxymethyl group, which spontaneously dehydrates, resulting in the formyl group of heme A. The polypeptide is Heme A synthase (Bradyrhizobium sp. (strain BTAi1 / ATCC BAA-1182)).